We begin with the raw amino-acid sequence, 695 residues long: Highly divergent homeobox (695 aa).

DNA-binding regions (homeobox) lie at residues Leu3 to Ser63 and Ala440 to Gly503. The interval Arg56–Val81 is disordered. Residues Gln653–Leu695 form a disordered region. Positions Thr679–Leu695 are enriched in polar residues.

The protein resides in the nucleus. In Gallus gallus (Chicken), this protein is Highly divergent homeobox (HDX).